The sequence spans 264 residues: MSQTETQDLLTIAGRDYRSRLLVGTGKYKDLDETRAAVEASGAEIITVAIRRTNIGQNPGEPNLLDVLPPDRYTYLPNTAGCYSAEDAVRTCRLARELLDGHTLVKLEVLGDEKTLYPDVVQTLAAAETLVKDGFQVMVYTSDDPILAKRLEEIGCVAVMPLAAPIGSGLGIQNRYNILEIVENAQVPILVDAGVGTASDAAIAMELGCDGVLMNTAIAAAKNPVLMASAMKKAIEAGREAFLAGRMPRKRYASASSPVEGTFF.

K106 functions as the Schiff-base intermediate with DXP in the catalytic mechanism. 1-deoxy-D-xylulose 5-phosphate is bound by residues G167, A193–G194, and N215–T216.

This sequence belongs to the ThiG family. In terms of assembly, homotetramer. Forms heterodimers with either ThiH or ThiS.

It localises to the cytoplasm. It carries out the reaction [ThiS sulfur-carrier protein]-C-terminal-Gly-aminoethanethioate + 2-iminoacetate + 1-deoxy-D-xylulose 5-phosphate = [ThiS sulfur-carrier protein]-C-terminal Gly-Gly + 2-[(2R,5Z)-2-carboxy-4-methylthiazol-5(2H)-ylidene]ethyl phosphate + 2 H2O + H(+). It functions in the pathway cofactor biosynthesis; thiamine diphosphate biosynthesis. Its function is as follows. Catalyzes the rearrangement of 1-deoxy-D-xylulose 5-phosphate (DXP) to produce the thiazole phosphate moiety of thiamine. Sulfur is provided by the thiocarboxylate moiety of the carrier protein ThiS. In vitro, sulfur can be provided by H(2)S. In Thioalkalivibrio sulfidiphilus (strain HL-EbGR7), this protein is Thiazole synthase.